Reading from the N-terminus, the 358-residue chain is Hydroxyproline O-arabinosyltransferase 2 (358 aa).

Residues 7-26 traverse the membrane as a helical; Signal-anchor segment; sequence YFFPILMTLSLFLIIRYNYI.

As to expression, ubiquitous.

The protein localises to the golgi apparatus. It localises to the cis-Golgi network membrane. It catalyses the reaction trans-4-hydroxy-L-prolyl-[protein] + UDP-beta-L-arabinofuranose = O-(beta-L-arabinofuranosyl)-trans-4-hydroxy-L-prolyl-[protein] + UDP + H(+). In terms of biological role, glycosyltransferase involved in the O-arabinosylation of several proteins including extensins and small signaling peptides. Catalyzes the transfer of the initial L-arabinose to the hydroxyl group of Hyp residues. Contributes redundantly with HPAT1 and HPAT3 to arabinosylation of EXT3. The sequence is that of Hydroxyproline O-arabinosyltransferase 2 from Arabidopsis thaliana (Mouse-ear cress).